A 374-amino-acid chain; its full sequence is tRNA-specific 2-thiouridylase MnmA (374 aa).

ATP is bound by residues 12–19 (GMSGGVDS) and Met-38. The interval 98-100 (NPD) is interaction with target base in tRNA. Cys-103 functions as the Nucleophile in the catalytic mechanism. Cys-103 and Cys-200 are joined by a disulfide. Position 127 (Gly-127) interacts with ATP. The tract at residues 150–152 (KDQ) is interaction with tRNA. The Cysteine persulfide intermediate role is filled by Cys-200. Residues 311–312 (RY) are interaction with tRNA.

The protein belongs to the MnmA/TRMU family.

It localises to the cytoplasm. It carries out the reaction S-sulfanyl-L-cysteinyl-[protein] + uridine(34) in tRNA + AH2 + ATP = 2-thiouridine(34) in tRNA + L-cysteinyl-[protein] + A + AMP + diphosphate + H(+). Catalyzes the 2-thiolation of uridine at the wobble position (U34) of tRNA, leading to the formation of s(2)U34. The chain is tRNA-specific 2-thiouridylase MnmA from Enterococcus faecalis (strain ATCC 700802 / V583).